We begin with the raw amino-acid sequence, 180 residues long: Probable RNA 2'-phosphotransferase (180 aa).

Belongs to the KptA/TPT1 family.

Removes the 2'-phosphate from RNA via an intermediate in which the phosphate is ADP-ribosylated by NAD followed by a presumed transesterification to release the RNA and generate ADP-ribose 1''-2''-cyclic phosphate (APPR&gt;P). May function as an ADP-ribosylase. In Pectobacterium atrosepticum (strain SCRI 1043 / ATCC BAA-672) (Erwinia carotovora subsp. atroseptica), this protein is Probable RNA 2'-phosphotransferase.